A 316-amino-acid polypeptide reads, in one-letter code: Pantothenate kinase (316 aa).

95-102 (GSVAVGKS) contacts ATP.

The protein belongs to the prokaryotic pantothenate kinase family.

The protein resides in the cytoplasm. It carries out the reaction (R)-pantothenate + ATP = (R)-4'-phosphopantothenate + ADP + H(+). The protein operates within cofactor biosynthesis; coenzyme A biosynthesis; CoA from (R)-pantothenate: step 1/5. This is Pantothenate kinase from Shewanella baltica (strain OS223).